A 1877-amino-acid polypeptide reads, in one-letter code: Transmembrane protein 131 (1877 aa).

The signal sequence occupies residues 1–20; it reads MGKRAGGAAAAAAAASTSSA. Topologically, residues 21–1115 are lumenal; sequence AGLEPAAGRG…AEALPRPNWE (1095 aa). Positions 107–281 are papD-L domain; sequence RFEPPMLDFH…ETKGVMRASF (175 aa). Residues 1116-1136 traverse the membrane as a helical segment; sequence LALYIIISGVMSALFLLVIGT. Residues 1137-1877 lie on the Cytoplasmic side of the membrane; the sequence is AYLEAQGIWE…WSNSHFPHEN (741 aa). A compositionally biased stretch (polar residues) spans 1197–1227; it reads NASSRPGTGSHRQCGTSVHPHSSHGSKNSAD. 4 disordered regions span residues 1197–1573, 1590–1655, 1679–1707, and 1830–1852; these read NASS…SSST, LKQR…NPTF, SDFS…SPVS, and NSAA…TYNP. The segment covering 1233–1258 has biased composition (low complexity); the sequence is TRNSSSMSSRTSPQAAASQSTSKTSP. Residues 1301-1311 are compositionally biased toward pro residues; sequence QPPPPVPQHQE. 2 positions are modified to phosphoserine: S1318 and S1338. 2 stretches are compositionally biased toward basic and acidic residues: residues 1326-1339 and 1349-1360; these read SHPE…HSSE and AMDKDFDHHDSS. S1371 carries the phosphoserine modification. The segment covering 1376–1391 has biased composition (basic residues); it reads SKGKGKSLQQRKAKPP. Residues 1392–1414 are compositionally biased toward basic and acidic residues; the sequence is KKQEEKEKRGKGKPQEDELKDAL. The segment covering 1420 to 1432 has biased composition (low complexity); that stretch reads SSTTTETSNPDTE. 2 stretches are compositionally biased toward polar residues: residues 1507–1523 and 1538–1550; these read TLAS…TKGT and LPSS…TSSS. Positions 1599–1608 are enriched in pro residues; sequence PASPSLPTAP. Low complexity predominate over residues 1609-1646; it reads CPFTSRGSYSSVVNSSGSDTKAKQTSSSKSKLTKAASL. Over residues 1830-1839 the composition is skewed to polar residues; that stretch reads NSAAAHTPSA. Phosphoserine occurs at positions 1857 and 1865.

The protein belongs to the TMEM131 family. As to quaternary structure, interacts (via PapD-L domain) with COL1A2 (via C-terminus); the interaction is direct, may occur with other collagen proteins, and is involved in assembly and TRAPPIII ER-to-Golgi transport complex-dependent secretion of collagen. Interacts (via C-terminus) with TRAPPC8 (via C-terminus); the interaction is direct.

It is found in the membrane. Its function is as follows. Collagen binding transmembrane protein involved in collagen secretion by recruiting the ER-to-Golgi transport complex TRAPPIII. May play a role in the immune response to viral infection. This chain is Transmembrane protein 131, found in Mus musculus (Mouse).